A 417-amino-acid polypeptide reads, in one-letter code: UDP-N-acetylmuramoylalanine--D-glutamate ligase (417 aa).

108–114 (GSNGKTT) provides a ligand contact to ATP.

This sequence belongs to the MurCDEF family.

Its subcellular location is the cytoplasm. The enzyme catalyses UDP-N-acetyl-alpha-D-muramoyl-L-alanine + D-glutamate + ATP = UDP-N-acetyl-alpha-D-muramoyl-L-alanyl-D-glutamate + ADP + phosphate + H(+). Its pathway is cell wall biogenesis; peptidoglycan biosynthesis. In terms of biological role, cell wall formation. Catalyzes the addition of glutamate to the nucleotide precursor UDP-N-acetylmuramoyl-L-alanine (UMA). The polypeptide is UDP-N-acetylmuramoylalanine--D-glutamate ligase (Chlamydia pneumoniae (Chlamydophila pneumoniae)).